Reading from the N-terminus, the 367-residue chain is MSLADQVLAVNDDLPIRTDKPVHSGKVRSVYWLTEEDSARLIKEKGYNVAPDAPLAIMVISDRISAFDCIWHGEHGLNGVPGKGAALNAISNHWFGLFKENGLADSHILDIPHPFVWIVQKAKPVKIEAICRKYITGSMWRAYEKGEREFCGIQLPEGLEKDKALPDLLMTPSTKGILKGIPGVPEADDVNITRQNIADNFAAFNFSSADDIALYEKLLKDGFGVISEALANVGQIFVDTKFEFGYVTDAAGNEKLIYMDEVGTPDSSRIWDAQEYQAGKIVENSKEGFRQFLLNYFPDPDILLNKDRMPEREALARDNELPEEALMAVSRTYINIAEKITGSAIVLSDNPKQEIIDILGREYGLID.

The protein belongs to the SAICAR synthetase family.

The enzyme catalyses 5-amino-1-(5-phospho-D-ribosyl)imidazole-4-carboxylate + L-aspartate + ATP = (2S)-2-[5-amino-1-(5-phospho-beta-D-ribosyl)imidazole-4-carboxamido]succinate + ADP + phosphate + 2 H(+). It functions in the pathway purine metabolism; IMP biosynthesis via de novo pathway; 5-amino-1-(5-phospho-D-ribosyl)imidazole-4-carboxamide from 5-amino-1-(5-phospho-D-ribosyl)imidazole-4-carboxylate: step 1/2. This chain is Phosphoribosylaminoimidazole-succinocarboxamide synthase, found in Vibrio vulnificus (strain CMCP6).